A 221-amino-acid chain; its full sequence is Protein-L-isoaspartate O-methyltransferase (221 aa).

S60 is an active-site residue.

The protein belongs to the methyltransferase superfamily. L-isoaspartyl/D-aspartyl protein methyltransferase family.

The protein localises to the cytoplasm. It carries out the reaction [protein]-L-isoaspartate + S-adenosyl-L-methionine = [protein]-L-isoaspartate alpha-methyl ester + S-adenosyl-L-homocysteine. Catalyzes the methyl esterification of L-isoaspartyl residues in peptides and proteins that result from spontaneous decomposition of normal L-aspartyl and L-asparaginyl residues. It plays a role in the repair and/or degradation of damaged proteins. The chain is Protein-L-isoaspartate O-methyltransferase from Rhodospirillum centenum (strain ATCC 51521 / SW).